The following is a 449-amino-acid chain: C4-dicarboxylate transport protein 1 (449 aa).

The next 8 membrane-spanning stretches (helical) occupy residues 16 to 38 (FLQV…DLAV), 53 to 71 (MLIA…SGAG), 84 to 106 (VIYF…YSLG), 157 to 176 (ILQV…LVGE), 197 to 219 (GMIV…ARYG), 229 to 251 (LVLV…VLRL), 311 to 333 (GFSI…PLAM), and 358 to 380 (LVIL…VLVL).

The protein belongs to the dicarboxylate/amino acid:cation symporter (DAACS) (TC 2.A.23) family.

It localises to the cell inner membrane. Its function is as follows. Responsible for the transport of dicarboxylates such as succinate, fumarate, and malate from the periplasm across the membrane. The protein is C4-dicarboxylate transport protein 1 (dctA1) of Pseudomonas aeruginosa (strain ATCC 15692 / DSM 22644 / CIP 104116 / JCM 14847 / LMG 12228 / 1C / PRS 101 / PAO1).